The sequence spans 247 residues: Mast cell protease 2 (247 aa).

An N-terminal signal peptide occupies residues 1–18 (MQALLFLMALLLPSGAGA). Residues 19-20 (EE) constitute a propeptide, activation peptide. A Peptidase S1 domain is found at 21–244 (IIGGVESIPH…YVPWINAVIN (224 aa)). A disulfide bond links Cys50 and Cys66. Catalysis depends on charge relay system residues His65 and Asp109. 2 disulfides stabilise this stretch: Cys143–Cys208 and Cys174–Cys187. Ser202 acts as the Charge relay system in catalysis.

This sequence belongs to the peptidase S1 family. Granzyme subfamily.

In terms of biological role, this enzyme, isolated from small intestine, specifically inactivates the apo forms of a certain group of intracellular pyridoxal phosphate-requiring enzymes. It has chymotrypsin-like specificity towards small substrates. The chain is Mast cell protease 2 (Mcpt2) from Rattus norvegicus (Rat).